The sequence spans 296 residues: Probable lipid kinase YegS-like (296 aa).

Residues 1–130 (MPHTLLILNG…IDLAQVNGEH (130 aa)) form the DAGKc domain. ATP-binding positions include T37, 63–69 (GDGTINE), and T92. Mg(2+) is bound by residues L212, D215, and L217. The Proton acceptor role is filled by E268.

It belongs to the diacylglycerol/lipid kinase family. YegS lipid kinase subfamily. Mg(2+) serves as cofactor. The cofactor is Ca(2+).

Its subcellular location is the cytoplasm. Its function is as follows. Probably phosphorylates lipids; the in vivo substrate is unknown. In Yersinia pestis bv. Antiqua (strain Angola), this protein is Probable lipid kinase YegS-like.